A 430-amino-acid chain; its full sequence is Adenylosuccinate synthetase (430 aa).

Residues 12–18 and 40–42 contribute to the GTP site; these read GDEGKGK and GHT. Aspartate 13 functions as the Proton acceptor in the catalytic mechanism. Aspartate 13 and glycine 40 together coordinate Mg(2+). IMP is bound by residues 13 to 16, 38 to 41, threonine 128, arginine 142, glutamine 223, threonine 238, and arginine 302; these read DEGK and NAGH. Histidine 41 functions as the Proton donor in the catalytic mechanism. 298–304 serves as a coordination point for substrate; that stretch reads TTTGRPR. GTP is bound by residues arginine 304, 330–332, and 413–415; these read SID and SVG.

It belongs to the adenylosuccinate synthetase family. In terms of assembly, homodimer. Mg(2+) is required as a cofactor.

Its subcellular location is the cytoplasm. The enzyme catalyses IMP + L-aspartate + GTP = N(6)-(1,2-dicarboxyethyl)-AMP + GDP + phosphate + 2 H(+). It functions in the pathway purine metabolism; AMP biosynthesis via de novo pathway; AMP from IMP: step 1/2. Plays an important role in the de novo pathway of purine nucleotide biosynthesis. Catalyzes the first committed step in the biosynthesis of AMP from IMP. The protein is Adenylosuccinate synthetase of Lactococcus lactis subsp. lactis (strain IL1403) (Streptococcus lactis).